The sequence spans 489 residues: Phosphoenolpyruvate carboxykinase (ATP) (489 aa).

Residues arginine 53 and tyrosine 159 each coordinate substrate. Residues histidine 185, 208–216 (GLSGTGKTT), aspartate 258, arginine 300, 409–410 (KI), and serine 415 contribute to the ATP site. Arginine 300 lines the substrate pocket.

It belongs to the phosphoenolpyruvate carboxykinase (ATP) family.

Its subcellular location is the cytoplasm. It catalyses the reaction oxaloacetate + ATP = phosphoenolpyruvate + ADP + CO2. The protein operates within carbohydrate biosynthesis; gluconeogenesis. Its function is as follows. Involved in the gluconeogenesis. Catalyzes the conversion of oxaloacetate (OAA) to phosphoenolpyruvate (PEP) through direct phosphoryl transfer between the nucleoside triphosphate and OAA. The protein is Phosphoenolpyruvate carboxykinase (ATP) of Aeropyrum pernix (strain ATCC 700893 / DSM 11879 / JCM 9820 / NBRC 100138 / K1).